Here is a 154-residue protein sequence, read N- to C-terminus: D-aminoacyl-tRNA deacylase (154 aa).

The short motif at 142-143 is the Gly-cisPro motif, important for rejection of L-amino acids element; it reads GP.

It belongs to the DTD family. In terms of assembly, homodimer.

The protein localises to the cytoplasm. It carries out the reaction glycyl-tRNA(Ala) + H2O = tRNA(Ala) + glycine + H(+). The enzyme catalyses a D-aminoacyl-tRNA + H2O = a tRNA + a D-alpha-amino acid + H(+). An aminoacyl-tRNA editing enzyme that deacylates mischarged D-aminoacyl-tRNAs. Also deacylates mischarged glycyl-tRNA(Ala), protecting cells against glycine mischarging by AlaRS. Acts via tRNA-based rather than protein-based catalysis; rejects L-amino acids rather than detecting D-amino acids in the active site. By recycling D-aminoacyl-tRNA to D-amino acids and free tRNA molecules, this enzyme counteracts the toxicity associated with the formation of D-aminoacyl-tRNA entities in vivo and helps enforce protein L-homochirality. This chain is D-aminoacyl-tRNA deacylase, found in Polaromonas sp. (strain JS666 / ATCC BAA-500).